Consider the following 463-residue polypeptide: Asparagine--tRNA ligase (463 aa).

It belongs to the class-II aminoacyl-tRNA synthetase family. As to quaternary structure, homodimer.

The protein resides in the cytoplasm. The enzyme catalyses tRNA(Asn) + L-asparagine + ATP = L-asparaginyl-tRNA(Asn) + AMP + diphosphate + H(+). This is Asparagine--tRNA ligase from Clostridium tetani (strain Massachusetts / E88).